The sequence spans 1293 residues: MSQHLPLVAAQPGIWMAEKLSELPSAWSVAHYVELTGEVDSPLLARAVVAGLAQADTLRMRFTEDNGEVWQWVDDALTFELPEIIDLRTNIDPHGTAQALMQADLQQDLRVDSGKPLVFHQLIQVADNRWYWYQRYHHLLVDGFSFPAITRQIANIYCTWLRGEPTPASPFTPFADVVEEYQQYRESEAWQRDAAFWAEQRRQLPPPASLSPAPLPGRSASADILRLKLEFTDGEFRQLATQLSGVQRTDLALALAALWLGRLCNRMDYAAGFIFMRRLGSAALTATGPVLNVLPLGIHIAAQETLPELATRLAAQLKKMRRHQRYDAEQIVRDSGRAAGDEPLFGPVLNIKVFDYQLDIPDVQAQTHTLATGPVNDLELALFPDVHGDLSIEILANKQRYDEPTLIQHAERLKMLIAQFAADPALLCGDVDIMLPGEYAQLAQLNATQVEIPETTLSALVAEQAAKTPDAPALADARYLFSYREMREQVVALANLLRERGVKPGDSVAVALPRSVFLTLALHAIVEAGAAWLPLDTGYPDDRLKMMLEDARPSLLITTDDQLPRFSDVPNLTSLCYNAPLTPQGSAPLQLSQPHHTAYIIFTSGSTGRPKGVMVGQTAIVNRLLWMQNHYPLTGEDVVAQKTPCSFDVSVWEFFWPFIAGAKLVMAEPEAHRDPLAMQQFFAEYGVTTTHFVPSMLAAFVASLTPQTARQSCATLKQVFCSGEALPADLCREWQQLTGAPLHNLYGPTEAAVDVSWYPAFGEELAQVRGSSVPIGYPVWNTGLRILDAMMHPVPPGVAGDLYLTGIQLAQGYLGRPDLTASRFIADPFAPGERMYRTGDVARWLDNGAVEYLGRSDDQLKIRGQRIELGEIDRVMQALPDVEQAVTHACVINQAAATGGDARQLVGYLVSQSGLPLDTSALQAQLRETLPPHMVPVVLLQLPQLPLSANGKLDRKALPLPELKAQAPGRAPKAGSETIIAAAFSSLLGCDVQDADADFFALGGHSLLAMKLAAQLSRQVARQVTPGQVMVASTVAKLATIIDAEEDSTRRMGFETILPLREGNGPTLFCFHPASGFAWQFSVLSRYLDPQWSIIGIQSPRPNGPMQTAANLDEVCEAHLATLLEQQPHGPYYLLGYSLGGTLAQGIAARLRARGEQVAFLGLLDTWPPETQNWQEKEANGLDPEVLAEINREREAFLAAQQGSTSTELFTTIEGNYADAVRLLTTAHSVPFDGKATLFVAERTLQEGMSPERAWSPWIAELDIYRQDCAHVDIISPGTFEKIGPIIRATLNR.

The tract at residues 1–301 is elongation/condensation; the sequence is MSQHLPLVAA…NVLPLGIHIA (301 aa). Residues 482 to 887 are adenylatione; sequence SYREMREQVV…ALPDVEQAVT (406 aa). The region spanning 971–1046 is the Carrier domain; it reads APKAGSETII…KLATIIDAEE (76 aa). S1006 is modified (O-(pantetheine 4'-phosphoryl)serine). A thioesterase region spans residues 1066–1293; it reads PTLFCFHPAS…GPIIRATLNR (228 aa). The Proton acceptor; for thioesterase activity role is filled by H1271.

Belongs to the ATP-dependent AMP-binding enzyme family. EntF subfamily. As to quaternary structure, proteins EntB, EntD, EntE and EntF are the component of the enterobactin synthase. Components probably do not form a stable complex. EntF acts as a catalytic monomer. Interacts with the MbtH-like protein YbdZ. YbdZ binds to the adenylation domain, but does not alter the structure of the domain. It depends on pantetheine 4'-phosphate as a cofactor. In terms of processing, 4'-phosphopantetheine is transferred from CoA to a specific serine of apo-EntF by EntD. Holo-EntF so formed is then acylated with seryl-AMP.

Its subcellular location is the cytoplasm. It carries out the reaction 3 2,3-dihydroxybenzoate + 3 L-serine + 6 ATP = enterobactin + 6 AMP + 6 diphosphate + 4 H(+). It catalyses the reaction holo-[peptidyl-carrier protein] + L-serine + ATP = L-seryl-[peptidyl-carrier protein] + AMP + diphosphate. It participates in siderophore biosynthesis; enterobactin biosynthesis. Its activity is regulated as follows. Adenylation activity is increased in the presence of the MbtH-like protein YbdZ. Involved in the biosynthesis of the siderophore enterobactin (enterochelin), which is a macrocyclic trimeric lactone of N-(2,3-dihydroxybenzoyl)-serine. EntF catalyzes the activation of L-serine via ATP-dependent PPi exchange reaction to form seryladenylate. Activated L-serine is loaded onto the peptidyl carrier domain via a thioester linkage to the phosphopanthetheine moiety, forming seryl-S-Ppant-EntF. EntF acts then as the sole catalyst for the formation of the three amide and three ester linkages found in enterobactin, using seryladenylate and 2,3-dihydroxybenzoate-S-Ppant-EntB (DHB-S-Ppant-EntB) as substrates, via the formation of a DHB-Ser-S-Ppant-EntF intermediate. This chain is Enterobactin synthase component F, found in Escherichia coli (strain K12).